The primary structure comprises 280 residues: Undecaprenyl-diphosphatase (280 aa).

Transmembrane regions (helical) follow at residues 3-23, 45-65, 88-108, 115-135, 150-170, 191-211, 225-245, and 255-275; these read IILL…EFLP, VDLF…YDYW, QLGL…FTFA, LFNP…IFYV, VSLK…IPGT, AEFS…LDFI, VLGI…RLLV, and IFAW…WGFG.

Belongs to the UppP family.

It is found in the cell inner membrane. The catalysed reaction is di-trans,octa-cis-undecaprenyl diphosphate + H2O = di-trans,octa-cis-undecaprenyl phosphate + phosphate + H(+). Catalyzes the dephosphorylation of undecaprenyl diphosphate (UPP). Confers resistance to bacitracin. The protein is Undecaprenyl-diphosphatase of Psychrobacter cryohalolentis (strain ATCC BAA-1226 / DSM 17306 / VKM B-2378 / K5).